The primary structure comprises 200 residues: Beta-1,6-glucan synthesis-associated protein KEG1 (200 aa).

Residues 1 to 15 (MAGIKLTHKLYQYYQ) lie on the Lumenal side of the membrane. A helical membrane pass occupies residues 16–36 (LATSFLYAALLIRWLILMPLV). Residues 37–44 (GSRFLPGG) are Cytoplasmic-facing. Residues 45–65 (IHEFLIYLMFYSSIMEVIWLL) form a helical membrane-spanning segment. Topologically, residues 66–82 (RFHGFKYGLLSRTFLKD) are lumenal. Residues 83 to 103 (LNFIYLVSVIHFYDDYEHALI) traverse the membrane as a helical segment. Residues 104 to 145 (LKNASYSSFIISLSLSQAYCHWCKLFKRKGVKERTLVWKVNT) lie on the Cytoplasmic side of the membrane. The helical transmembrane segment at 146-166 (FVTLPILYLSEFALLLLNIQV) threads the bilayer. Residues 167 to 173 (KNYHSTP) lie on the Lumenal side of the membrane. The helical transmembrane segment at 174 to 194 (TLDIINRVVLLAYFPVLLTAY) threads the bilayer. The Cytoplasmic segment spans residues 195–200 (KKLLTK).

In terms of assembly, interacts with KRE6.

Its subcellular location is the endoplasmic reticulum membrane. In terms of biological role, involved in the biosynthesis of (1-&gt;6)-beta-D-glucan polymers of the cell wall. Required for viability. Involved in maintaining chromosome stability. The sequence is that of Beta-1,6-glucan synthesis-associated protein KEG1 (KEG1) from Saccharomyces cerevisiae (strain ATCC 204508 / S288c) (Baker's yeast).